The primary structure comprises 535 residues: Peptide chain release factor 3 (535 aa).

The region spanning 8-278 is the tr-type G domain; the sequence is ARRRTFAIIS…VDQAPAPGPR (271 aa). GTP-binding positions include 17–24, 85–89, and 139–142; these read SHPDAGKT, DTPGH, and NKLD.

This sequence belongs to the TRAFAC class translation factor GTPase superfamily. Classic translation factor GTPase family. PrfC subfamily.

It localises to the cytoplasm. In terms of biological role, increases the formation of ribosomal termination complexes and stimulates activities of RF-1 and RF-2. It binds guanine nucleotides and has strong preference for UGA stop codons. It may interact directly with the ribosome. The stimulation of RF-1 and RF-2 is significantly reduced by GTP and GDP, but not by GMP. In Bordetella parapertussis (strain 12822 / ATCC BAA-587 / NCTC 13253), this protein is Peptide chain release factor 3.